Reading from the N-terminus, the 491-residue chain is Acetyl-coenzyme A carboxylase carboxyl transferase subunit beta, chloroplastic (491 aa).

A disordered region spans residues L28–D56. The region spanning L223–H491 is the CoA carboxyltransferase N-terminal domain. Residues C227, C230, C246, and C249 each coordinate Zn(2+). Residues C227–C249 form a C4-type zinc finger.

It belongs to the AccD/PCCB family. Acetyl-CoA carboxylase is a heterohexamer composed of biotin carboxyl carrier protein, biotin carboxylase and 2 subunits each of ACCase subunit alpha and ACCase plastid-coded subunit beta (accD). Zn(2+) serves as cofactor.

The protein localises to the plastid. It is found in the chloroplast stroma. It carries out the reaction N(6)-carboxybiotinyl-L-lysyl-[protein] + acetyl-CoA = N(6)-biotinyl-L-lysyl-[protein] + malonyl-CoA. The protein operates within lipid metabolism; malonyl-CoA biosynthesis; malonyl-CoA from acetyl-CoA: step 1/1. Functionally, component of the acetyl coenzyme A carboxylase (ACC) complex. Biotin carboxylase (BC) catalyzes the carboxylation of biotin on its carrier protein (BCCP) and then the CO(2) group is transferred by the transcarboxylase to acetyl-CoA to form malonyl-CoA. This Daucus carota (Wild carrot) protein is Acetyl-coenzyme A carboxylase carboxyl transferase subunit beta, chloroplastic.